Consider the following 166-residue polypeptide: NAD(P)H-quinone oxidoreductase subunit I, chloroplastic (166 aa).

4Fe-4S ferredoxin-type domains are found at residues 55–84 (GRIH…VDWK) and 95–124 (LNYS…MTEE). 8 residues coordinate [4Fe-4S] cluster: Cys64, Cys67, Cys70, Cys74, Cys104, Cys107, Cys110, and Cys114.

This sequence belongs to the complex I 23 kDa subunit family. NDH is composed of at least 16 different subunits, 5 of which are encoded in the nucleus. The cofactor is [4Fe-4S] cluster.

The protein localises to the plastid. It localises to the chloroplast thylakoid membrane. The enzyme catalyses a plastoquinone + NADH + (n+1) H(+)(in) = a plastoquinol + NAD(+) + n H(+)(out). It carries out the reaction a plastoquinone + NADPH + (n+1) H(+)(in) = a plastoquinol + NADP(+) + n H(+)(out). In terms of biological role, NDH shuttles electrons from NAD(P)H:plastoquinone, via FMN and iron-sulfur (Fe-S) centers, to quinones in the photosynthetic chain and possibly in a chloroplast respiratory chain. The immediate electron acceptor for the enzyme in this species is believed to be plastoquinone. Couples the redox reaction to proton translocation, and thus conserves the redox energy in a proton gradient. This chain is NAD(P)H-quinone oxidoreductase subunit I, chloroplastic, found in Pericome caudata (Mountain tail-leaf).